Here is a 338-residue protein sequence, read N- to C-terminus: Ketol-acid reductoisomerase (NADP(+)) (338 aa).

Positions 1–181 (MQVYYDKDCD…GGGRSGIIET (181 aa)) constitute a KARI N-terminal Rossmann domain. NADP(+) is bound by residues 24-27 (YGSQ), Arg-47, Ser-50, Ser-52, and 82-85 (DEFQ). The active site involves His-107. Residue Gly-133 participates in NADP(+) binding. Residues 182–327 (TFKDETETDL…GKLRAMMPWI (146 aa)) form the KARI C-terminal knotted domain. Mg(2+) contacts are provided by Asp-190, Glu-194, Glu-226, and Glu-230. Ser-251 contacts substrate.

This sequence belongs to the ketol-acid reductoisomerase family. Requires Mg(2+) as cofactor.

The enzyme catalyses (2R)-2,3-dihydroxy-3-methylbutanoate + NADP(+) = (2S)-2-acetolactate + NADPH + H(+). The catalysed reaction is (2R,3R)-2,3-dihydroxy-3-methylpentanoate + NADP(+) = (S)-2-ethyl-2-hydroxy-3-oxobutanoate + NADPH + H(+). Its pathway is amino-acid biosynthesis; L-isoleucine biosynthesis; L-isoleucine from 2-oxobutanoate: step 2/4. It participates in amino-acid biosynthesis; L-valine biosynthesis; L-valine from pyruvate: step 2/4. Involved in the biosynthesis of branched-chain amino acids (BCAA). Catalyzes an alkyl-migration followed by a ketol-acid reduction of (S)-2-acetolactate (S2AL) to yield (R)-2,3-dihydroxy-isovalerate. In the isomerase reaction, S2AL is rearranged via a Mg-dependent methyl migration to produce 3-hydroxy-3-methyl-2-ketobutyrate (HMKB). In the reductase reaction, this 2-ketoacid undergoes a metal-dependent reduction by NADPH to yield (R)-2,3-dihydroxy-isovalerate. The chain is Ketol-acid reductoisomerase (NADP(+)) from Saccharophagus degradans (strain 2-40 / ATCC 43961 / DSM 17024).